We begin with the raw amino-acid sequence, 755 residues long: SWI/SNF-related matrix-associated actin-dependent regulator of chromatin subfamily A-like protein 1 (755 aa).

Residues Ser7 to Leu27 are a coiled coil. Disordered regions lie at residues Gln26–Ser91 and Ser104–Ser134. A compositionally biased stretch (polar residues) spans Pro32–Ser63. The residue at position 63 (Ser63) is a Phosphoserine. The HARP domain maps to Pro139–Pro217. Positions Cys256–Lys412 constitute a Helicase ATP-binding domain. Asp269–Thr276 is a binding site for ATP. The short motif at Asp361–His364 is the DESH box element. Residues Tyr527–Ala681 enclose the Helicase C-terminal domain.

The protein belongs to the SNF2/RAD54 helicase family. SMARCAL1 subfamily.

The protein localises to the nucleus. Functionally, ATP-dependent annealing helicase that catalyzes the rewinding of the stably unwound DNA. In Drosophila melanogaster (Fruit fly), this protein is SWI/SNF-related matrix-associated actin-dependent regulator of chromatin subfamily A-like protein 1 (Marcal1).